A 563-amino-acid polypeptide reads, in one-letter code: Arginine--tRNA ligase (563 aa).

The 'HIGH' region motif lies at 137–147 (ANPTGLLHMGN).

It belongs to the class-I aminoacyl-tRNA synthetase family. As to quaternary structure, monomer.

The protein localises to the cytoplasm. It carries out the reaction tRNA(Arg) + L-arginine + ATP = L-arginyl-tRNA(Arg) + AMP + diphosphate. This is Arginine--tRNA ligase from Desulforudis audaxviator (strain MP104C).